The sequence spans 1080 residues: Protein transport protein SEC24 C (1080 aa).

Positions 1–10 (MVAPVPPGAP) are enriched in pro residues. Disordered stretches follow at residues 1–189 (MVAP…SGMI), 201–220 (GSGGFPRGTQFPGAAVTTPQ), and 316–367 (TAMG…SDYV). Residues 12–43 (PNSQQNSGPPNFYPGSQGNSNALADNMQNLSL) are compositionally biased toward polar residues. Residues 45–70 (RPPPMMPGSGPRPPPPFGQSPQPFPQ) show a composition bias toward pro residues. 3 stretches are compositionally biased toward low complexity: residues 71–84 (QSPSYGAPQRGPSP), 142–160 (PAASSSGFPAFGPSGSVAA), and 178–189 (GSGMSMPPSGMI). Polar residues predominate over residues 340-356 (GSSSSPTVFETRQSNQA). Zn(2+)-binding residues include Cys430, Cys433, Cys452, and Cys455. The zinc finger-like stretch occupies residues 430-455 (CSRCKGYINPFMKFIDQGRKFICNFC).

The protein belongs to the SEC23/SEC24 family. SEC24 subfamily. As to quaternary structure, component of the coat protein complex II (COPII), composed of at least five proteins: the Sec23/24 complex, the Sec13/31 complex and Sar1. In terms of tissue distribution, mainly expressed at low levels in pollen, leaves, roots and stems.

The protein resides in the cytoplasmic vesicle. The protein localises to the COPII-coated vesicle membrane. Its subcellular location is the endoplasmic reticulum membrane. It localises to the golgi apparatus membrane. In terms of biological role, component of the coat protein complex II (COPII), that covers ER-derived vesicles involved in transport from the endoplasmic reticulum to the Golgi apparatus. COPII is composed of at least five proteins: the SEC23/24 complex, the SEC13/31 complex, and the protein SAR1. Acts in the cytoplasm to promote the transport of secretory, plasma membrane, and vacuolar proteins from the endoplasmic reticulum to the Golgi complex. The chain is Protein transport protein SEC24 C from Arabidopsis thaliana (Mouse-ear cress).